The sequence spans 417 residues: Serine hydroxymethyltransferase (417 aa).

Residues L112 and 116–118 each bind (6S)-5,6,7,8-tetrahydrofolate; that span reads GHL. K221 bears the N6-(pyridoxal phosphate)lysine mark. Residue E247 participates in (6S)-5,6,7,8-tetrahydrofolate binding.

It belongs to the SHMT family. As to quaternary structure, homodimer. Pyridoxal 5'-phosphate is required as a cofactor.

Its subcellular location is the cytoplasm. The enzyme catalyses (6R)-5,10-methylene-5,6,7,8-tetrahydrofolate + glycine + H2O = (6S)-5,6,7,8-tetrahydrofolate + L-serine. The protein operates within one-carbon metabolism; tetrahydrofolate interconversion. Its pathway is amino-acid biosynthesis; glycine biosynthesis; glycine from L-serine: step 1/1. Catalyzes the reversible interconversion of serine and glycine with tetrahydrofolate (THF) serving as the one-carbon carrier. This reaction serves as the major source of one-carbon groups required for the biosynthesis of purines, thymidylate, methionine, and other important biomolecules. Also exhibits THF-independent aldolase activity toward beta-hydroxyamino acids, producing glycine and aldehydes, via a retro-aldol mechanism. The polypeptide is Serine hydroxymethyltransferase (Borreliella burgdorferi (strain ATCC 35210 / DSM 4680 / CIP 102532 / B31) (Borrelia burgdorferi)).